Consider the following 194-residue polypeptide: Accessory gene regulator protein B (194 aa).

5 helical membrane passes run 44–64, 80–100, 107–127, 142–162, and 163–183; these read IVVYGLAIIFHTFFYTLLTHL, SSLLCHIQNIIFFIIFPYLII, FVLLSMALVGLIITILYAPAA, KILSIFLYCTIVVISLVTKEP, and VNKLILFGVILESLTLLPIFF.

It belongs to the AgrB family.

The protein resides in the cell membrane. Its function is as follows. Essential for the production of a quorum sensing system signal molecule, the autoinducing peptide (AIP). This quorum sensing system is responsible for the regulation of the expression of virulence factor genes. Involved in the proteolytic processing of AgrD, the precursor of AIP. The polypeptide is Accessory gene regulator protein B (Staphylococcus epidermidis).